Consider the following 152-residue polypeptide: Acidic phospholipase A2 1 (152 aa).

Residues 1–19 (MNPAYFLVLAAVCVSLLGA) form the signal peptide. The propeptide occupies 20-27 (ANIPPQPL). 7 cysteine pairs are disulfide-bonded: C38-C104, C54-C151, C56-C72, C71-C132, C78-C125, C88-C118, and C111-C123. Y55, G57, and G59 together coordinate Ca(2+). H75 is a catalytic residue. D76 is a Ca(2+) binding site. Residue D126 is part of the active site.

This sequence belongs to the phospholipase A2 family. Group I subfamily. D49 sub-subfamily. Ca(2+) serves as cofactor. As to expression, expressed by the venom gland.

The protein resides in the secreted. The catalysed reaction is a 1,2-diacyl-sn-glycero-3-phosphocholine + H2O = a 1-acyl-sn-glycero-3-phosphocholine + a fatty acid + H(+). PLA2 catalyzes the calcium-dependent hydrolysis of the 2-acyl groups in 3-sn-phosphoglycerides. The chain is Acidic phospholipase A2 1 from Bungarus candidus (Malayan krait).